A 1480-amino-acid polypeptide reads, in one-letter code: UDP-N-acetylglucosamine--peptide N-acetylglucosaminyltransferase (1480 aa).

TPR repeat units follow at residues 38–71, 113–146, 176–209, and 288–321; these read IFLY…SKQK, VQVL…STSN, ATIL…IKDP, and STIC…QPSF. The span at 468–485 shows a compositional bias: basic and acidic residues; that stretch reads PQEKESPKSDKIASEKPL. The interval 468-497 is disordered; sequence PQEKESPKSDKIASEKPLVESNPGRSRTPS. 2 TPR repeats span residues 613–646 and 648–680; these read YEPF…NPRF and DGYL…DPDN. The interval 1093 to 1128 is disordered; that stretch reads LSLDGSDATSSSVDSGIGSRTHSEAPIGGGDKDEGA. Residues 1099–1112 are compositionally biased toward polar residues; the sequence is DATSSSVDSGIGSR. Residues glutamine 1269, lysine 1272, 1333-1336, 1351-1353, and aspartate 1357 each bind UDP; these read HIRR and GST.

This sequence belongs to the glycosyltransferase 41 family. O-GlcNAc transferase subfamily.

The protein resides in the cytoplasm. It localises to the nucleus. It carries out the reaction L-seryl-[protein] + UDP-N-acetyl-alpha-D-glucosamine = 3-O-(N-acetyl-beta-D-glucosaminyl)-L-seryl-[protein] + UDP + H(+). It catalyses the reaction L-threonyl-[protein] + UDP-N-acetyl-alpha-D-glucosamine = 3-O-(N-acetyl-beta-D-glucosaminyl)-L-threonyl-[protein] + UDP + H(+). It functions in the pathway protein modification; protein glycosylation. In terms of biological role, catalyzes the transfer of a single N-acetylglucosamine from UDP-GlcNAc to a serine or threonine residue in cytoplasmic and nuclear proteins resulting in their modification with a beta-linked N-acetylglucosamine (O-GlcNAc). This Giardia intestinalis (strain ATCC 50803 / WB clone C6) (Giardia lamblia) protein is UDP-N-acetylglucosamine--peptide N-acetylglucosaminyltransferase.